The primary structure comprises 445 residues: RING finger and transmembrane domain-containing protein 2 (445 aa).

The Extracellular segment spans residues Met-1–Lys-183. The disordered stretch occupies residues Lys-12–Asp-41. Residues Leu-184–Leu-203 form a helical membrane-spanning segment. Topologically, residues Arg-204–Val-215 are cytoplasmic. Residues Leu-216 to Phe-236 traverse the membrane as a helical segment. The Extracellular portion of the chain corresponds to Ser-237–Asp-256. The chain crosses the membrane as a helical span at residues Phe-257–Ala-277. Residues Leu-278–Ser-330 are Cytoplasmic-facing. Residues Tyr-331–Gly-351 form a helical membrane-spanning segment. Over Arg-352–Tyr-445 the chain is Extracellular. An RING-type zinc finger spans residues Cys-385–Arg-423.

It localises to the membrane. E3 ubiquitin-protein ligase that negatively regulates IL3-dependent cellular responses through IL3RA ubiquitination and degradation by the proteasome, having an anti-inflammatory effect. The chain is RING finger and transmembrane domain-containing protein 2 (Rnft2) from Mus musculus (Mouse).